The primary structure comprises 669 residues: NAD-dependent malic enzyme, mitochondrial (669 aa).

The segment covering 33–43 (IQQSRLYSSNT) has biased composition (polar residues). The tract at residues 33–68 (IQQSRLYSSNTRSHKATTTRENTFQKPYSDEEVTKT) is disordered. Arginine 142 lines the fumarate pocket. Tyrosine 187 (proton donor) is an active-site residue. Lysine 259 (proton acceptor) is an active-site residue. Residues glutamate 330, aspartate 331, and aspartate 354 each contribute to the a divalent metal cation site. Residues alanine 387 and alanine 390 each contribute to the NAD(+) site. Residues asparagine 499 and asparagine 539 each contribute to the (S)-malate site.

This sequence belongs to the malic enzymes family. It depends on Mg(2+) as a cofactor. The cofactor is Mn(2+).

It localises to the mitochondrion matrix. It carries out the reaction (S)-malate + NAD(+) = pyruvate + CO2 + NADH. The enzyme catalyses oxaloacetate + H(+) = pyruvate + CO2. Its function is as follows. NAD-dependent mitochondrial malic enzyme that catalyzes the oxidative decarboxylation of malate to pyruvate. This Saccharomyces cerevisiae (strain ATCC 204508 / S288c) (Baker's yeast) protein is NAD-dependent malic enzyme, mitochondrial (MAE1).